The following is a 278-amino-acid chain: Elongation factor Ts (278 aa).

The interval 82 to 85 (TDFV) is involved in Mg(2+) ion dislocation from EF-Tu.

It belongs to the EF-Ts family.

Its subcellular location is the cytoplasm. Functionally, associates with the EF-Tu.GDP complex and induces the exchange of GDP to GTP. It remains bound to the aminoacyl-tRNA.EF-Tu.GTP complex up to the GTP hydrolysis stage on the ribosome. This is Elongation factor Ts from Streptomyces avermitilis (strain ATCC 31267 / DSM 46492 / JCM 5070 / NBRC 14893 / NCIMB 12804 / NRRL 8165 / MA-4680).